Consider the following 206-residue polypeptide: Ribosome maturation factor RimP (206 aa).

Residues 164-206 (GGIPEGRAVPSDAVDLTDDSGVDSVEDDEAELEDVENEEGFDK) are disordered. Positions 178–206 (DLTDDSGVDSVEDDEAELEDVENEEGFDK) are enriched in acidic residues.

It belongs to the RimP family.

Its subcellular location is the cytoplasm. Required for maturation of 30S ribosomal subunits. This chain is Ribosome maturation factor RimP, found in Rhodococcus erythropolis (strain PR4 / NBRC 100887).